A 577-amino-acid chain; its full sequence is Adenine deaminase (577 aa).

The protein belongs to the metallo-dependent hydrolases superfamily. Adenine deaminase family. Mn(2+) is required as a cofactor.

It carries out the reaction adenine + H2O + H(+) = hypoxanthine + NH4(+). The protein is Adenine deaminase of Geobacillus kaustophilus (strain HTA426).